We begin with the raw amino-acid sequence, 252 residues long: Glycine-rich cell wall structural protein 1.0 (252 aa).

The first 30 residues, 1–30 (MATSKVLLSNVLFVFVCFGICSAARTLLTL), serve as a signal peptide directing secretion. The segment at 231 to 252 (GSGYGGGGGSGEGGGHGGGYYP) is disordered.

In terms of tissue distribution, expressed in young hypocotyls.

It localises to the secreted. Its subcellular location is the cell wall. Its function is as follows. Responsible for plasticity of the cell wall. The sequence is that of Glycine-rich cell wall structural protein 1.0 from Phaseolus vulgaris (Kidney bean).